The following is a 255-amino-acid chain: Biotin carboxyl carrier protein of acetyl-CoA carboxylase 2, chloroplastic (255 aa).

Residues 1 to 87 constitute a chloroplast transit peptide; the sequence is MASLSVPCVK…TNVPEPAELS (87 aa). The segment at 148-193 is disordered; the sequence is PPAQPVALPPSPTPTSTPATAKPTSAPSSSHPPLKSPMAGTFYRSP. The segment covering 149 to 162 has biased composition (pro residues); that stretch reads PAQPVALPPSPTPT. A compositionally biased stretch (low complexity) spans 163-180; sequence STPATAKPTSAPSSSHPP. One can recognise a Biotinyl-binding domain in the interval 178 to 254; it reads HPPLKSPMAG…SVDTPLFVIA (77 aa). Lys220 bears the N6-biotinyllysine mark.

Acetyl-CoA carboxylase is a heterohexamer composed of biotin carboxyl carrier protein, biotin carboxylase and 2 subunits each of ACCase subunit alpha and ACCase plastid-coded subunit beta (accD). In terms of tissue distribution, primarily expressed in 7 to 10 days after flowering seeds at levels approximately 2-fold less abundant than BCCP1.

The protein resides in the plastid. Its subcellular location is the chloroplast. It functions in the pathway lipid metabolism; fatty acid biosynthesis. Functionally, this protein is a component of the acetyl coenzyme A carboxylase complex; first, biotin carboxylase catalyzes the carboxylation of the carrier protein and then the transcarboxylase transfers the carboxyl group to form malonyl-CoA. This is Biotin carboxyl carrier protein of acetyl-CoA carboxylase 2, chloroplastic (BCCP2) from Arabidopsis thaliana (Mouse-ear cress).